A 543-amino-acid polypeptide reads, in one-letter code: Carboxypeptidase Y homolog A (543 aa).

The first 17 residues, 1-17 (MRVAASALLAGAASAAV), serve as a signal peptide directing secretion. A propeptide spanning residues 18–128 (APQQQILKFP…KLEQFDLRVK (111 aa)) is cleaved from the precursor. Cystine bridges form between Cys-182–Cys-421, Cys-316–Cys-330, Cys-340–Cys-363, Cys-347–Cys-356, and Cys-385–Cys-391. N-linked (GlcNAc...) asparagine glycosylation occurs at Asn-213. Residue Ser-269 is part of the active site. The active site involves Asp-460. Asn-508 carries an N-linked (GlcNAc...) asparagine glycan. His-519 is a catalytic residue.

It belongs to the peptidase S10 family.

The protein localises to the vacuole. It catalyses the reaction Release of a C-terminal amino acid with broad specificity.. In terms of biological role, vacuolar carboxypeptidase involved in degradation of small peptides. Digests preferentially peptides containing an aliphatic or hydrophobic residue in P1' position, as well as methionine, leucine or phenylalanine in P1 position of ester substrate. In Phaeosphaeria nodorum (strain SN15 / ATCC MYA-4574 / FGSC 10173) (Glume blotch fungus), this protein is Carboxypeptidase Y homolog A (CPYA).